The sequence spans 465 residues: MLPLVALVGRPNVGKSTIFNALTRTRDALVHDQPGVTRDRNYGVCRLDEQQPFIVVDTGGIAGDEEGLAGATARQARAAAGEADLVLFVVDGREGASSLDDEILAWLRKLARPTVLVINKIDGTDEESVRSEFSRYGFSDVVALSAAHRQGIDDLLEEVGARLPEEGAGELLDNDPARVRIAFVGRPNVGKSTLVNRLLGEERMIASEVPGTTRDSIAVDLERDGRQYRLIDTAGLRRRGKVEEAVEKFSAFKTLQAIEQCQVAVLMLDATEGVTDQDATILGAILDAGRALVVAINKWDGQSDYQRAQAEDLLSRKLGFVNWAEAVRISALHGSGMRELFQAIHRAHASATHEFSTSEVNQALEIAYETNPPPSIRGHVSKLRYVHPGGANPPTFIVHGTRLKVLPESYKRYLENFFRKRFKLVGTPVRFIFREGANPYEGKKNPLSDRQIARKRRLMRHVKGK.

2 EngA-type G domains span residues 3 to 167 and 179 to 352; these read PLVA…PEEG and VRIA…ASAT. Residues 9–16, 57–61, 119–122, 185–192, 232–236, and 297–300 each bind GTP; these read GRPNVGKS, DTGGI, NKID, DTAGL, and NKWD. Residues 353–437 form the KH-like domain; sequence HEFSTSEVNQ…PVRFIFREGA (85 aa).

The protein belongs to the TRAFAC class TrmE-Era-EngA-EngB-Septin-like GTPase superfamily. EngA (Der) GTPase family. Associates with the 50S ribosomal subunit.

Functionally, GTPase that plays an essential role in the late steps of ribosome biogenesis. The chain is GTPase Der from Xanthomonas campestris pv. campestris (strain 8004).